A 642-amino-acid polypeptide reads, in one-letter code: Palmitoyltransferase akr1 (642 aa).

ANK repeat units lie at residues 1–29, 33–62, 67–96, 100–129, 133–162, and 166–196; these read MGSL…DVNA, GGAT…DVNA, LQAA…DPLL, QGFN…SVDL, QQHT…DVLA, and DKMT…PCTA. The Cytoplasmic segment spans residues 1–256; that stretch reads MGSLFLAASQ…SKFQFSQKTF (256 aa). 2 helical membrane passes run 257-277 and 278-298; these read IIFC…IMSI and CPMV…FKYI. Over 299–316 the chain is Cytoplasmic; it reads TTCIHANIDIVHFYLETP. The chain crosses the membrane as a helical span at residues 317–337; that stretch reads FLAGIFSSIFFWVWCHSLLYI. The Lumenal segment spans residues 338–343; the sequence is VPKTLP. A helical transmembrane segment spans residues 344-364; the sequence is IKPLSSLLFVLISFTCIGLYV. Residues 365-444 are Cytoplasmic-facing; the sequence is RTAFQNPGYV…NCVGARNHRT (80 aa). Residues 400–450 form the DHHC domain; the sequence is HYCLKCFQVKPPRSYHCGACKRCINRYDHHCPWTGNCVGARNHRTFLLFVF. Cys430 acts as the S-palmitoyl cysteine intermediate in catalysis. Residues 445-465 form a helical membrane-spanning segment; it reads FLLFVFTLSTLIPIYFYVAFY. Topologically, residues 466 to 496 are lumenal; the sequence is YLQNIPIQKKYESYRCLFISGTICQWSLKDM. The helical transmembrane segment at 497 to 517 threads the bilayer; sequence FVLVASLTLFVNWCWVVVLAF. Residues 518-642 lie on the Cytoplasmic side of the membrane; sequence TQICQVAHNV…GRQDEATRHV (125 aa).

This sequence belongs to the DHHC palmitoyltransferase family. AKR/ZDHHC17 subfamily.

It is found in the early endosome membrane. The protein localises to the golgi apparatus membrane. The catalysed reaction is L-cysteinyl-[protein] + hexadecanoyl-CoA = S-hexadecanoyl-L-cysteinyl-[protein] + CoA. In terms of biological role, palmitoyltransferase specific for casein kinase 1. This Schizosaccharomyces pombe (strain 972 / ATCC 24843) (Fission yeast) protein is Palmitoyltransferase akr1 (akr1).